Consider the following 193-residue polypeptide: ATP-dependent Clp protease proteolytic subunit (193 aa).

Catalysis depends on Ser97, which acts as the Nucleophile. The active site involves His122.

The protein belongs to the peptidase S14 family. In terms of assembly, fourteen ClpP subunits assemble into 2 heptameric rings which stack back to back to give a disk-like structure with a central cavity, resembling the structure of eukaryotic proteasomes.

It localises to the cytoplasm. It catalyses the reaction Hydrolysis of proteins to small peptides in the presence of ATP and magnesium. alpha-casein is the usual test substrate. In the absence of ATP, only oligopeptides shorter than five residues are hydrolyzed (such as succinyl-Leu-Tyr-|-NHMec, and Leu-Tyr-Leu-|-Tyr-Trp, in which cleavage of the -Tyr-|-Leu- and -Tyr-|-Trp bonds also occurs).. Functionally, cleaves peptides in various proteins in a process that requires ATP hydrolysis. Has a chymotrypsin-like activity. Plays a major role in the degradation of misfolded proteins. In Fusobacterium nucleatum subsp. nucleatum (strain ATCC 25586 / DSM 15643 / BCRC 10681 / CIP 101130 / JCM 8532 / KCTC 2640 / LMG 13131 / VPI 4355), this protein is ATP-dependent Clp protease proteolytic subunit.